The sequence spans 375 residues: MTTEKINLLDFDRKGMRQFFADELGEKAFRADQVMKWIYHFGVDDFDNMTNINKKLREKLQHKCEIKAPTVAEAQHSSDGTIKWAMKVGDQDVETVYIPEDDRATLCVSSQVGCALECKFCSTAQQGFNRNLKVSEIIGQVWRAAREIGLQKETGRRPITNVVMMGMGEPLLNMKNLIPALEIMLDDLGFGLSKRRVTVSTSGVVSGLDQMTGKIDVALAISLHAPNDELRSQIMPINDRWDIQDFLASVRRYIASSNANRGKVTVEYVLLDHVNDDMDHARELAELMKDTPCKINLIPFNPYPGSPYKKPSNSRIDRFQKTLMQYEHTVTVRKTRGDDIDAACGQLVGDVIDRTKRTAALKAARGAETIDVKAV.

Catalysis depends on Glu94, which acts as the Proton acceptor. Positions 100-339 constitute a Radical SAM core domain; it reads EDDRATLCVS…VTVRKTRGDD (240 aa). Cys107 and Cys344 are oxidised to a cystine. [4Fe-4S] cluster contacts are provided by Cys114, Cys118, and Cys121. S-adenosyl-L-methionine is bound by residues 168–169, Ser200, 222–224, and Asn301; these read GE and SLH. Cys344 (S-methylcysteine intermediate) is an active-site residue.

It belongs to the radical SAM superfamily. RlmN family. [4Fe-4S] cluster serves as cofactor.

The protein resides in the cytoplasm. It carries out the reaction adenosine(2503) in 23S rRNA + 2 reduced [2Fe-2S]-[ferredoxin] + 2 S-adenosyl-L-methionine = 2-methyladenosine(2503) in 23S rRNA + 5'-deoxyadenosine + L-methionine + 2 oxidized [2Fe-2S]-[ferredoxin] + S-adenosyl-L-homocysteine. The enzyme catalyses adenosine(37) in tRNA + 2 reduced [2Fe-2S]-[ferredoxin] + 2 S-adenosyl-L-methionine = 2-methyladenosine(37) in tRNA + 5'-deoxyadenosine + L-methionine + 2 oxidized [2Fe-2S]-[ferredoxin] + S-adenosyl-L-homocysteine. Its function is as follows. Specifically methylates position 2 of adenine 2503 in 23S rRNA and position 2 of adenine 37 in tRNAs. m2A2503 modification seems to play a crucial role in the proofreading step occurring at the peptidyl transferase center and thus would serve to optimize ribosomal fidelity. This Vibrio campbellii (strain ATCC BAA-1116) protein is Dual-specificity RNA methyltransferase RlmN.